The sequence spans 367 residues: MTEETVQPLIEFKNVSLDYGETKVLKKVDLEIEEGKFYTLLGPSGSGKSTILSLISGRLQPTGGDILIEGKNVNSLPSNQRKVNTVFQNYALFPNMNVYDNVAFGPSIKGFSKKKIDQLVKSMLKLVKLDDFSDREISEISGGQQQRVAIARALANQPKVLLLDEPLSALDYKLRKEMQSELRELQQRLGITFIFVTHDQEEALAMSDWIFVINDGKVEQSGSPVDIYDEPINHFVANFIGEANIVPGVMKEDYLVSFAGKDFKNVDAGMRTNERVEVVIRPEDLDIVVPSRGKLQVTIEDQSFRGDSYEITAIDDAGNEWAVQATNPAKIGQRRGLKFDPEDIHIMRLNESEEDFDARLESYEGED.

An ABC transporter domain is found at 10 to 240 (IEFKNVSLDY…PINHFVANFI (231 aa)). 42–49 (GPSGSGKS) provides a ligand contact to ATP.

The protein belongs to the ABC transporter superfamily. Spermidine/putrescine importer (TC 3.A.1.11.1) family. As to quaternary structure, the complex is composed of two ATP-binding proteins (PotA), two transmembrane proteins (PotB and PotC) and a solute-binding protein (PotD).

It localises to the cell membrane. It carries out the reaction ATP + H2O + polyamine-[polyamine-binding protein]Side 1 = ADP + phosphate + polyamineSide 2 + [polyamine-binding protein]Side 1.. Part of the ABC transporter complex PotABCD involved in spermidine/putrescine import. Responsible for energy coupling to the transport system. This is Spermidine/putrescine import ATP-binding protein PotA from Oenococcus oeni (strain ATCC BAA-331 / PSU-1).